The primary structure comprises 1393 residues: DNA-directed RNA polymerase subunit beta' (1393 aa).

Cys72, Cys74, Cys87, and Cys90 together coordinate Zn(2+). Residues Asp463, Asp465, and Asp467 each contribute to the Mg(2+) site. Residues Cys812, Cys887, Cys894, and Cys897 each coordinate Zn(2+).

It belongs to the RNA polymerase beta' chain family. As to quaternary structure, the RNAP catalytic core consists of 2 alpha, 1 beta, 1 beta' and 1 omega subunit. When a sigma factor is associated with the core the holoenzyme is formed, which can initiate transcription. Mg(2+) serves as cofactor. The cofactor is Zn(2+).

It catalyses the reaction RNA(n) + a ribonucleoside 5'-triphosphate = RNA(n+1) + diphosphate. In terms of biological role, DNA-dependent RNA polymerase catalyzes the transcription of DNA into RNA using the four ribonucleoside triphosphates as substrates. The sequence is that of DNA-directed RNA polymerase subunit beta' from Chlamydia abortus (strain DSM 27085 / S26/3) (Chlamydophila abortus).